We begin with the raw amino-acid sequence, 143 residues long: Methylglyoxal synthase (143 aa).

The 143-residue stretch at 1-143 (MTVKKIALVA…DYEAYRNRII (143 aa)) folds into the MGS-like domain. Residues His11, Lys15, 37–40 (TGST), and 57–58 (SG) each bind substrate. Asp63 acts as the Proton donor/acceptor in catalysis. Substrate is bound at residue His90.

Belongs to the methylglyoxal synthase family.

It carries out the reaction dihydroxyacetone phosphate = methylglyoxal + phosphate. Its function is as follows. Catalyzes the formation of methylglyoxal from dihydroxyacetone phosphate. This Coxiella burnetii (strain Dugway 5J108-111) protein is Methylglyoxal synthase.